A 193-amino-acid polypeptide reads, in one-letter code: Serine/threonine-protein kinase mos (193 aa).

Residues 47 to 193 (LCLLHLLGSG…HLDLKPANIF (147 aa)) enclose the Protein kinase domain. Residues 53 to 61 (LGSGGFGSV) and Lys74 contribute to the ATP site. Catalysis depends on Asp186, which acts as the Proton acceptor.

This sequence belongs to the protein kinase superfamily. Ser/Thr protein kinase family.

It catalyses the reaction L-seryl-[protein] + ATP = O-phospho-L-seryl-[protein] + ADP + H(+). The enzyme catalyses L-threonyl-[protein] + ATP = O-phospho-L-threonyl-[protein] + ADP + H(+). The sequence is that of Serine/threonine-protein kinase mos (MOS) from Sibon nebulatus (Cloudy snail-eating snake).